Here is a 247-residue protein sequence, read N- to C-terminus: Cell division protein ZapD (247 aa).

This sequence belongs to the ZapD family. As to quaternary structure, interacts with FtsZ.

The protein resides in the cytoplasm. In terms of biological role, cell division factor that enhances FtsZ-ring assembly. Directly interacts with FtsZ and promotes bundling of FtsZ protofilaments, with a reduction in FtsZ GTPase activity. The chain is Cell division protein ZapD from Escherichia fergusonii (strain ATCC 35469 / DSM 13698 / CCUG 18766 / IAM 14443 / JCM 21226 / LMG 7866 / NBRC 102419 / NCTC 12128 / CDC 0568-73).